The following is a 591-amino-acid chain: Fidgetin-like protein 1 (591 aa).

Disordered stretches follow at residues 1-117 and 223-249; these read MYSP…KSSL and GQEP…SQPI. Over residues 17–26 the composition is skewed to basic and acidic residues; the sequence is KRPETEENRG. Residues 76 to 93 are compositionally biased toward acidic residues; that stretch reads DDDPESIVIDEDDEEDEP. The span at 237–249 shows a compositional bias: polar residues; it reads RQSSSQSNHSQPI. ATP is bound by residues A319 and 359 to 364; that span reads GTGKTM.

Belongs to the AAA ATPase family. Hexamer. Mg(2+) serves as cofactor.

It is found in the nucleus. It catalyses the reaction ATP + H2O = ADP + phosphate + H(+). Its function is as follows. Has a role in spindle assembly which acts in the progression through mitosis during embryogenesis. Required for fertility. The protein is Fidgetin-like protein 1 (figl-1) of Caenorhabditis briggsae.